We begin with the raw amino-acid sequence, 217 residues long: Small ribosomal subunit protein uS3 (217 aa).

The region spanning 38–106 (IRKFLKKRLS…KVTLDIQEVR (69 aa)) is the KH type-2 domain.

It belongs to the universal ribosomal protein uS3 family. Part of the 30S ribosomal subunit. Forms a tight complex with proteins S10 and S14.

In terms of biological role, binds the lower part of the 30S subunit head. Binds mRNA in the 70S ribosome, positioning it for translation. This Desulfotalea psychrophila (strain LSv54 / DSM 12343) protein is Small ribosomal subunit protein uS3.